We begin with the raw amino-acid sequence, 104 residues long: Large ribosomal subunit protein uL23 (104 aa).

This sequence belongs to the universal ribosomal protein uL23 family. As to quaternary structure, part of the 50S ribosomal subunit. Contacts protein L29, and trigger factor when it is bound to the ribosome.

Its function is as follows. One of the early assembly proteins it binds 23S rRNA. One of the proteins that surrounds the polypeptide exit tunnel on the outside of the ribosome. Forms the main docking site for trigger factor binding to the ribosome. The chain is Large ribosomal subunit protein uL23 from Polynucleobacter necessarius subsp. necessarius (strain STIR1).